The primary structure comprises 285 residues: tRNA-cytidine(32) 2-sulfurtransferase (285 aa).

A PP-loop motif motif is present at residues 49 to 54; it reads SGGKDS. Residues C124, C127, and C215 each contribute to the [4Fe-4S] cluster site.

The protein belongs to the TtcA family. In terms of assembly, homodimer. Mg(2+) is required as a cofactor. [4Fe-4S] cluster serves as cofactor.

The protein localises to the cytoplasm. The catalysed reaction is cytidine(32) in tRNA + S-sulfanyl-L-cysteinyl-[cysteine desulfurase] + AH2 + ATP = 2-thiocytidine(32) in tRNA + L-cysteinyl-[cysteine desulfurase] + A + AMP + diphosphate + H(+). Its pathway is tRNA modification. Functionally, catalyzes the ATP-dependent 2-thiolation of cytidine in position 32 of tRNA, to form 2-thiocytidine (s(2)C32). The sulfur atoms are provided by the cysteine/cysteine desulfurase (IscS) system. The protein is tRNA-cytidine(32) 2-sulfurtransferase of Hahella chejuensis (strain KCTC 2396).